A 128-amino-acid polypeptide reads, in one-letter code: Small ribosomal subunit protein uS11 (128 aa).

The protein belongs to the universal ribosomal protein uS11 family. Part of the 30S ribosomal subunit. Interacts with proteins S7 and S18. Binds to IF-3.

In terms of biological role, located on the platform of the 30S subunit, it bridges several disparate RNA helices of the 16S rRNA. Forms part of the Shine-Dalgarno cleft in the 70S ribosome. The sequence is that of Small ribosomal subunit protein uS11 from Aster yellows witches'-broom phytoplasma (strain AYWB).